Consider the following 71-residue polypeptide: Ranatuerin-2P (71 aa).

An N-terminal signal peptide occupies residues 1–20 (MFTMKKSLLLFFFLGTISLS). A propeptide spanning residues 21-44 (LCEQERGADEDDGVEITEEEVKRG) is cleaved from the precursor. An intrachain disulfide couples C66 to C71.

In terms of tissue distribution, expressed by the skin glands.

Its subcellular location is the secreted. Its function is as follows. Antibacterial activity against Gram-positive bacterium S.aureus and Gram-negative bacterium E.coli. Has activity against C.albicans. In Lithobates pipiens (Northern leopard frog), this protein is Ranatuerin-2P.